Reading from the N-terminus, the 269-residue chain is Phosphatidylglycerol--prolipoprotein diacylglyceryl transferase (269 aa).

The next 7 membrane-spanning stretches (helical) occupy residues 10-30, 56-76, 91-111, 126-146, 172-192, 200-220, and 237-257; these read IAVS…LIGF, AIFY…ILFY, IWEG…AMFF, FLAP…FIGG, PSQL…LWFF, YCVS…VEFV, and EGQL…MAGL. Residue Arg139 coordinates a 1,2-diacyl-sn-glycero-3-phospho-(1'-sn-glycerol).

Belongs to the Lgt family.

It localises to the cell inner membrane. It carries out the reaction L-cysteinyl-[prolipoprotein] + a 1,2-diacyl-sn-glycero-3-phospho-(1'-sn-glycerol) = an S-1,2-diacyl-sn-glyceryl-L-cysteinyl-[prolipoprotein] + sn-glycerol 1-phosphate + H(+). It participates in protein modification; lipoprotein biosynthesis (diacylglyceryl transfer). In terms of biological role, catalyzes the transfer of the diacylglyceryl group from phosphatidylglycerol to the sulfhydryl group of the N-terminal cysteine of a prolipoprotein, the first step in the formation of mature lipoproteins. The protein is Phosphatidylglycerol--prolipoprotein diacylglyceryl transferase of Marinomonas sp. (strain MWYL1).